Consider the following 212-residue polypeptide: Soluble inorganic pyrophosphatase 1 (212 aa).

Residues lysine 62 and arginine 76 each coordinate substrate. The Proton donor role is filled by tyrosine 84. Tyrosine 88 serves as a coordination point for substrate. Positions 98, 103, and 135 each coordinate Mg(2+). Residue tyrosine 172 coordinates substrate.

This sequence belongs to the PPase family. As to quaternary structure, monomer. Mg(2+) is required as a cofactor. In terms of tissue distribution, ubiquitous. Lower level of expression in ovary, stigma and pollen.

It localises to the cytoplasm. The enzyme catalyses diphosphate + H2O = 2 phosphate + H(+). With respect to regulation, inhibited by Zn(2+), Ca(2+), Ba(2+), Fe(2+), Co(2+), Cu(2+), Eu(2+), Eu(3+) and Mn(2+). Its function is as follows. Catalyzes the irreversible hydrolysis of pyrophosphate (PPi) to phosphate. The MgPPi(2-) complex binds to the enzyme only after a free Mg(2+) ion has bound. No activity with glycerol-3-phosphate, glucose-6-phosphate, p-nitrophenylphosphate, ADP, NADP(+), NAD(+),NADH, NADPH or phosphoribosyl pyrophosphate as substrates. Controls the equilibrium of gluconeogenic reactions in the heterotrophic growth phase of early seedling establishment. Determinates the rate of cytosolic glycolysis, providing carbon for seed storage lipid accumulation. The sequence is that of Soluble inorganic pyrophosphatase 1 from Arabidopsis thaliana (Mouse-ear cress).